Here is a 451-residue protein sequence, read N- to C-terminus: MADNTPTTANDFLNGAAQVAKSPEEIAKENDLLPKLITHLDRHLIFPLLQFVADQDEEPSPEITKAKFELLKKTNMTDYVASLYCEIEGVEEPPKEYATKRQEILQRLEIFGQESEKITDLLGREDVVTGLRSDKVANLEFLKKEHDVTIDMVNVLYDFGNFQYSCGNYGAAAELLYQFRVLSTDDDKVTAATWGKLACEILTGNWESAMEEVQKVKELIETKLFNKPVAQLNHRTWLIHWALFPFFNHEPARDVICDLFFSPAFINTIQTACPWILRYLTAAVITNRNRTRNTGQYQKQLKDIIRIVKQENYEYSDPVTDFIKALYLDFDFEEAQKKLSEAEEVLRSDFFLVAASENFVEAARHLISESYCKIHQRIDIKDLSARLGLNQDEGEKWIVNLIRDTRVDAKIDYKEGTVVMNHPPSSVYQQVIERTKGGFFRTQVLSAAVAK.

In terms of domain architecture, PCI spans 245 to 425 (PFFNHEPARD…GTVVMNHPPS (181 aa)).

It belongs to the eIF-3 subunit E family. As to quaternary structure, component of the eukaryotic translation initiation factor 3 (eIF-3) complex.

The protein resides in the cytoplasm. Functionally, component of the eukaryotic translation initiation factor 3 (eIF-3) complex, which is involved in protein synthesis of a specialized repertoire of mRNAs and, together with other initiation factors, stimulates binding of mRNA and methionyl-tRNAi to the 40S ribosome. The eIF-3 complex specifically targets and initiates translation of a subset of mRNAs involved in cell proliferation. This Sclerotinia sclerotiorum (strain ATCC 18683 / 1980 / Ss-1) (White mold) protein is Eukaryotic translation initiation factor 3 subunit E (int6).